The primary structure comprises 196 residues: dITP/XTP pyrophosphatase (196 aa).

Position 10–15 (10–15) interacts with substrate; the sequence is TSNKGK. Aspartate 71 serves as the catalytic Proton acceptor. Aspartate 71 serves as a coordination point for Mg(2+). Residues serine 72, 156 to 159, lysine 179, and 184 to 185 contribute to the substrate site; these read FGYD and HR.

It belongs to the HAM1 NTPase family. In terms of assembly, homodimer. The cofactor is Mg(2+).

The catalysed reaction is XTP + H2O = XMP + diphosphate + H(+). It catalyses the reaction dITP + H2O = dIMP + diphosphate + H(+). The enzyme catalyses ITP + H2O = IMP + diphosphate + H(+). Functionally, pyrophosphatase that catalyzes the hydrolysis of nucleoside triphosphates to their monophosphate derivatives, with a high preference for the non-canonical purine nucleotides XTP (xanthosine triphosphate), dITP (deoxyinosine triphosphate) and ITP. Seems to function as a house-cleaning enzyme that removes non-canonical purine nucleotides from the nucleotide pool, thus preventing their incorporation into DNA/RNA and avoiding chromosomal lesions. This Haemophilus ducreyi (strain 35000HP / ATCC 700724) protein is dITP/XTP pyrophosphatase.